The sequence spans 150 residues: Catabolic 3-dehydroquinase (150 aa).

Catalysis depends on Y24, which acts as the Proton acceptor. Residues N75, H81, and D88 each coordinate substrate. H101 acts as the Proton donor in catalysis. Residues 102–103 (VS) and R112 contribute to the substrate site.

It belongs to the type-II 3-dehydroquinase family. In terms of assembly, homododecamer. Adopts a ring-like structure, composed of an arrangement of two hexameric rings stacked on top of one another.

It catalyses the reaction 3-dehydroquinate = 3-dehydroshikimate + H2O. It functions in the pathway aromatic compound metabolism; 3,4-dihydroxybenzoate biosynthesis; 3,4-dihydroxybenzoate from 3-dehydroquinate: step 1/2. In terms of biological role, is involved in the catabolism of quinate. Allows the utilization of quinate as carbon source via the beta-ketoadipate pathway. This chain is Catabolic 3-dehydroquinase, found in Aspergillus clavatus (strain ATCC 1007 / CBS 513.65 / DSM 816 / NCTC 3887 / NRRL 1 / QM 1276 / 107).